The primary structure comprises 249 residues: Probable transcriptional regulatory protein aq_1575 (249 aa).

It belongs to the TACO1 family.

The protein localises to the cytoplasm. This Aquifex aeolicus (strain VF5) protein is Probable transcriptional regulatory protein aq_1575.